We begin with the raw amino-acid sequence, 524 residues long: Phenylalanine--tRNA ligase alpha subunit (524 aa).

The L-phenylalanine site is built by Thr362, Tyr441, and Phe467.

The protein belongs to the class-II aminoacyl-tRNA synthetase family. Phe-tRNA synthetase alpha subunit type 2 subfamily. As to quaternary structure, tetramer of two alpha and two beta subunits. Mg(2+) is required as a cofactor.

It localises to the cytoplasm. The catalysed reaction is tRNA(Phe) + L-phenylalanine + ATP = L-phenylalanyl-tRNA(Phe) + AMP + diphosphate + H(+). This Methanopyrus kandleri (strain AV19 / DSM 6324 / JCM 9639 / NBRC 100938) protein is Phenylalanine--tRNA ligase alpha subunit.